Reading from the N-terminus, the 341-residue chain is MATDRSVRIGLIGAGAIGEDHARRLSTVIRGADVVAVHDVDPSRAKTVATRFRDARVIPDGNSLIGDPDVDAVVVASAAPTHEAYVLAAIAARKPVFCEKPLATTAAGCLRIVEAEKAHGRRFVRVGFMRRFDPAYLGLKAELRSGAIGHPLLAHLAHRNPAVPSTLRTTDAIADSLVHEMDLVRWLFDTEIREVRAVAGRRNAKAGPDLHDPLLVLVRMATDVVVDVELSLNIGYGYHIRAEIVGENGTVALASEQPIVRRISGEERRPVAQHWKTRFAAAYDAELSEWVRDVSQGRVSGPSAWDGYAATLATDAAAESLRSDTAVAAFPGDVPTLYREP.

Belongs to the Gfo/Idh/MocA family. Homotetramer.

The enzyme catalyses myo-inositol + NAD(+) = scyllo-inosose + NADH + H(+). In terms of biological role, involved in the oxidation of myo-inositol (MI) to 2-keto-myo-inositol (2KMI or 2-inosose). The sequence is that of Inositol 2-dehydrogenase from Acidothermus cellulolyticus (strain ATCC 43068 / DSM 8971 / 11B).